The chain runs to 554 residues: MRSKRFEALAKRPVNQDGFVKEWIEEGFIAMESPNDPKPSIKIVNGAVTELDGKPVSEFDLIDHFIARYGINLNRAEEVMAMDSVKLANMLCDPNVKRSEIVPLTTAMTPAKIVEVVSHMNVVEMMMAMQKMRARRTPSQQAHVTNVKDNPVQIAADAAEGAWRGFDEQETTVAVARYAPFNAIALLVGSQVGRPGVLTQCSLEEATELKLGMLGHTCYAETISVYGTEPVFTDGDDTPWSKGFLASSYASRGLKMRFTSGSGSEVQMGYAEGKSMLYLEARCIYITKAAGVQGLQNGSVSCIGVPSAVPSGIRAVLAENLICSSLDLECASSNDQTFTHSDMRRTARLLMQFLPGTDFISSGYSAVPNYDNMFAGSNEDAEDFDDYNVIQRDLKVDGGLRPVREEDVIAIRNKAARALQAVFAGMGLPPITDEEVEAATYAHGSKDMPERNIVEDIKFAQEIINKNRNGLEVVKALAQGGFTDVAQDMLNIQKAKLTGDYLHTSAIIVGDGQVLSAVNDVNDYAGPATGYRLQGERWEEIKNIPGALDPNEID.

Belongs to the diol/glycerol dehydratase large subunit family. The propanediol dehydratase enzyme is a heterotrimeric complex composed of a large (PduC), a medium (PduD) and a small (PduE) subunit. Adenosylcob(III)alamin serves as cofactor.

The protein resides in the bacterial microcompartment. The catalysed reaction is propane-1,2-diol = propanal + H2O. It participates in polyol metabolism; 1,2-propanediol degradation. Its activity is regulated as follows. Inhibited by glycerol. Its function is as follows. Part of the PduCDE complex that catalyzes the dehydration of 1,2-propanediol (1,2-PD) to propionaldehyde. Required for S.typhimurium growth on 1,2-PD as the sole carbon and energy source. This subunit is directly targeted to the BMC. Functionally, the 1,2-PD-specific bacterial microcompartment (BMC) concentrates low levels of 1,2-PD catabolic enzymes, concentrates volatile reaction intermediates thus enhancing pathway flux and keeps the level of toxic, mutagenic propionaldehyde low. This is Propanediol dehydratase large subunit from Salmonella typhimurium (strain LT2 / SGSC1412 / ATCC 700720).